A 396-amino-acid polypeptide reads, in one-letter code: MGWKTLDDMDLQGKSVLTRVDINVPMEDGKVTDDTRIRRLVPTISDLLSKGAKPVLLAHFGRPKGKVVPEMSLQPLVPALEAAFGAPVMFVADCRGPAAKGAVDALAPGQILLLENTRFYPGEEQNDADLAKEMAALGDIYCNDAFSAAHRAHASTEALARLLPACAGRLMEAELKALEGSLATPERPVTAVVGGAKVSTKLDLLGNLVAKVDTLVIGGGMANTFLAAQGIDVGKSLCEHDMTGTAKDIMARAEAAGCTILLPSDVVVAREFKAGADNETVPADACPADAMILDAGPASVAAISTVFAESKTLIWNGPLGAFEIAPFDIATNTAAQKAAELTKAGQLISVAGGGDTVAALNQAGAAEAFSYISTAGGAFLEWMEGKVLPGVAALQT.

Substrate is bound by residues 21 to 23 (DIN), R36, 59 to 62 (HFGR), R118, and R151. ATP-binding positions include K201, E323, and 353–356 (GGDT).

Belongs to the phosphoglycerate kinase family. In terms of assembly, monomer.

The protein localises to the cytoplasm. It carries out the reaction (2R)-3-phosphoglycerate + ATP = (2R)-3-phospho-glyceroyl phosphate + ADP. The protein operates within carbohydrate degradation; glycolysis; pyruvate from D-glyceraldehyde 3-phosphate: step 2/5. This is Phosphoglycerate kinase from Ruegeria sp. (strain TM1040) (Silicibacter sp.).